We begin with the raw amino-acid sequence, 371 residues long: DNA replication and repair protein RecF (371 aa).

Gly-30–Thr-37 lines the ATP pocket.

This sequence belongs to the RecF family.

The protein localises to the cytoplasm. In terms of biological role, the RecF protein is involved in DNA metabolism; it is required for DNA replication and normal SOS inducibility. RecF binds preferentially to single-stranded, linear DNA. It also seems to bind ATP. This chain is DNA replication and repair protein RecF, found in Desulforamulus reducens (strain ATCC BAA-1160 / DSM 100696 / MI-1) (Desulfotomaculum reducens).